Consider the following 123-residue polypeptide: Large ribosomal subunit protein bL17 (123 aa).

The protein belongs to the bacterial ribosomal protein bL17 family. In terms of assembly, part of the 50S ribosomal subunit. Contacts protein L32.

This chain is Large ribosomal subunit protein bL17, found in Staphylococcus haemolyticus (strain JCSC1435).